Here is a 398-residue protein sequence, read N- to C-terminus: Mu-type opioid receptor (398 aa).

The Extracellular segment spans residues 1–66 (MDSSTGPGNT…CPQTGSPSMV (66 aa)). Residues N9, N31, N38, N46, and N53 are each glycosylated (N-linked (GlcNAc...) asparagine). Residues 67 to 91 (TAITIMALYSIVCVVGLFGNFLVMY) traverse the membrane as a helical segment. The Cytoplasmic segment spans residues 92–104 (VIVRYTKMKTATN). The helical transmembrane segment at 105–129 (IYIFNLALADALATSTLPFQSVNYL) threads the bilayer. Over 130-140 (MGTWPFGTILC) the chain is Extracellular. A disulfide bridge links C140 with C217. Residues 141–163 (KIVISIDYYNMFTSIFTLCTMSV) traverse the membrane as a helical segment. Over 164 to 183 (DRYIAVCHPVKALDFRTPRN) the chain is Cytoplasmic. Y166 is subject to Phosphotyrosine. Residues 184-205 (AKIVNVCNWILSSAIGLPVMFM) traverse the membrane as a helical segment. Residues 206 to 228 (ATTKYRQGSIDCTLTFSHPTWYW) are Extracellular-facing. A helical transmembrane segment spans residues 229–253 (ENLLKICVFIFAFIMPVLIITVCYG). The Cytoplasmic segment spans residues 254 to 277 (LMILRLKSVRMLSGSKEKDRNLRR). Residues 278–304 (ITRMVLVVVAVFIVCWTPIHIYVIIKA) traverse the membrane as a helical segment. The Extracellular portion of the chain corresponds to 305-312 (LITIPETT). A helical transmembrane segment spans residues 313–336 (FQTVSWHFCIALGYTNSCLNPVLY). The NPxxY; plays a role in stabilizing the activated conformation of the receptor signature appears at 332–336 (NPVLY). At 337–398 (AFLDENFKRC…NLEAETAPLP (62 aa)) the chain is on the cytoplasmic side. A lipid anchor (S-palmitoyl cysteine) is attached at C351. Residues 361–385 (QNSTRVRQNTREHPSTANTVDRTNH) form a disordered region. A Phosphoserine modification is found at S363. Residue T370 is modified to Phosphothreonine. S375 carries the phosphoserine modification. T394 carries the post-translational modification Phosphothreonine.

It belongs to the G-protein coupled receptor 1 family. In terms of assembly, forms homooligomers and heterooligomers with other GPCRs, such as OPRD1, OPRK1, OPRL1, NPFFR2, ADRA2A, SSTR2, CNR1 and CCR5 (probably in dimeric forms). Interacts with heterotrimeric G proteins; interaction with a heterotrimeric complex containing GNAI1, GNB1 and GNG2 stabilizes the active conformation of the receptor and increases its affinity for endomorphin-2, the synthetic opioid peptide DAMGO and for morphinan agonists. Interacts with PPL; the interaction disrupts agonist-mediated G-protein activation. Interacts (via C-terminus) with DNAJB4 (via C-terminus). Interacts with calmodulin; the interaction inhibits the constitutive activity of OPRM1; it abolishes basal and attenuates agonist-stimulated G-protein coupling. Interacts with FLNA, PLD2, RANBP9 and WLS and GPM6A. Interacts with RTP4. Interacts with SYP and GNAS. Interacts with RGS9, RGS17, RGS20, RGS4, PPP1R9B and HINT1. Phosphorylated. Differentially phosphorylated in basal and agonist-induced conditions. Agonist-mediated phosphorylation modulates receptor internalization. Phosphorylated by GRK2 in a agonist-dependent manner. Phosphorylation at Tyr-166 requires receptor activation, is dependent on non-receptor protein tyrosine kinase Src and results in a decrease in agonist efficacy by reducing G-protein coupling efficiency. Phosphorylated on tyrosine residues; the phosphorylation is involved in agonist-induced G-protein-independent receptor down-regulation. Phosphorylation at Ser-375 is involved in G-protein-dependent but not beta-arrestin-dependent activation of the ERK pathway. In terms of processing, ubiquitinated. A basal ubiquitination seems not to be related to degradation. Ubiquitination is increased upon formation of OPRM1:OPRD1 oligomers leading to proteasomal degradation; the ubiquitination is diminished by RTP4. Brain. Is expressed in the cerebral cortex, caudate putamen, nucleus accumbens, septal nuclei, thalamus, hippocampus, and habenula. Not detected in cerebellum.

Its subcellular location is the cell membrane. It localises to the cell projection. The protein resides in the axon. It is found in the perikaryon. The protein localises to the dendrite. Its subcellular location is the endosome. Functionally, receptor for endogenous opioids such as beta-endorphin and endomorphin. Receptor for natural and synthetic opioids including morphine, heroin, DAMGO, fentanyl, etorphine, buprenorphin and methadone. Also activated by enkephalin peptides, such as Met-enkephalin or Met-enkephalin-Arg-Phe, with higher affinity for Met-enkephalin-Arg-Phe. Agonist binding to the receptor induces coupling to an inactive GDP-bound heterotrimeric G-protein complex and subsequent exchange of GDP for GTP in the G-protein alpha subunit leading to dissociation of the G-protein complex with the free GTP-bound G-protein alpha and the G-protein beta-gamma dimer activating downstream cellular effectors. The agonist- and cell type-specific activity is predominantly coupled to pertussis toxin-sensitive G(i) and G(o) G alpha proteins, GNAI1, GNAI2, GNAI3 and GNAO1 isoforms Alpha-1 and Alpha-2, and to a lesser extent to pertussis toxin-insensitive G alpha proteins GNAZ and GNA15. They mediate an array of downstream cellular responses, including inhibition of adenylate cyclase activity and both N-type and L-type calcium channels, activation of inward rectifying potassium channels, mitogen-activated protein kinase (MAPK), phospholipase C (PLC), phosphoinositide/protein kinase (PKC), phosphoinositide 3-kinase (PI3K) and regulation of NF-kappa-B. Also couples to adenylate cyclase stimulatory G alpha proteins. The selective temporal coupling to G-proteins and subsequent signaling can be regulated by RGSZ proteins, such as RGS9, RGS17 and RGS4. Phosphorylation by members of the GPRK subfamily of Ser/Thr protein kinases and association with beta-arrestins is involved in short-term receptor desensitization. Beta-arrestins associate with the GPRK-phosphorylated receptor and uncouple it from the G-protein thus terminating signal transduction. The phosphorylated receptor is internalized through endocytosis via clathrin-coated pits which involves beta-arrestins. The activation of the ERK pathway occurs either in a G-protein-dependent or a beta-arrestin-dependent manner and is regulated by agonist-specific receptor phosphorylation. Acts as a class A G-protein coupled receptor (GPCR) which dissociates from beta-arrestin at or near the plasma membrane and undergoes rapid recycling. Receptor down-regulation pathways are varying with the agonist and occur dependent or independent of G-protein coupling. Endogenous ligands induce rapid desensitization, endocytosis and recycling. Heterooligomerization with other GPCRs can modulate agonist binding, signaling and trafficking properties. This is Mu-type opioid receptor (Oprm1) from Rattus norvegicus (Rat).